A 575-amino-acid polypeptide reads, in one-letter code: Guanine nucleotide-binding protein-like 3-like protein (575 aa).

Basic residues predominate over residues 1 to 30 (MMKLRHKNKKPGKGSKGCKKPAKQNGKKAA). A disordered region spans residues 1–75 (MMKLRHKNKK…AAREQERHRR (75 aa)). The interval 9 to 28 (KKPGKGSKGCKKPAKQNGKK) is required for nucleolar localization. Basic and acidic residues predominate over residues 42–72 (SNDHASREAELKKKRVGEMREKQQAAREQER). Positions 51-79 (ELKKKRVGEMREKQQAAREQERHRRRTIE) form a coiled coil. The region spanning 118–303 (YKEFHKVVEY…LLDAPGIVPG (186 aa)) is the CP-type G domain. Residues 166–169 (NKID), 252–259 (GLPNVGKS), and 296–299 (DAPG) each bind GTP. A Glycyl lysine isopeptide (Lys-Gly) (interchain with G-Cter in SUMO1) cross-link involves residue K470.

Belongs to the TRAFAC class YlqF/YawG GTPase family. In terms of assembly, interacts with MDM2; this interaction, which occurs in the nucleoplasm, stabilizes MDM2. Indirectly interacts with TP53, via MDM2-binding. Interacts with TERF1; this interaction probably occurs in the nucleoplasm and is increased during mitosis, when the nucleolus is disassembled. This binding may promote TERF1 homodimerization. Interacts with TERT.

It localises to the nucleus. The protein localises to the nucleolus. Stabilizes TERF1 telomeric association by preventing TERF1 recruitment by PML. Stabilizes TERF1 protein by preventing its ubiquitination and hence proteasomal degradation. Does so by interfering with TERF1-binding to FBXO4 E3 ubiquitin-protein ligase. Required for cell proliferation. By stabilizing TRF1 protein during mitosis, promotes metaphase-to-anaphase transition. Stabilizes MDM2 protein by preventing its ubiquitination, and hence proteasomal degradation. By acting on MDM2, may affect TP53 activity. Required for normal processing of ribosomal pre-rRNA. Binds GTP. The chain is Guanine nucleotide-binding protein-like 3-like protein (GNL3L) from Bos taurus (Bovine).